Here is a 666-residue protein sequence, read N- to C-terminus: UvrABC system protein B (666 aa).

Residues 25-412 (NGIKNNNKWQ…SENIAEQVIR (388 aa)) form the Helicase ATP-binding domain. 38–45 (GVTGSGKT) contacts ATP. Positions 91-114 (YYDYYQPEAYVAQTDTYIEKDASI) match the Beta-hairpin motif. The 167-residue stretch at 429–595 (QIDDLYSEIK…TIKKAVRDVI (167 aa)) folds into the Helicase C-terminal domain. A UVR domain is found at 622–657 (DKLIKEFEKEMKEAAKELQFEKAAYFRDKVNELKKK).

It belongs to the UvrB family. Forms a heterotetramer with UvrA during the search for lesions. Interacts with UvrC in an incision complex.

It localises to the cytoplasm. Functionally, the UvrABC repair system catalyzes the recognition and processing of DNA lesions. A damage recognition complex composed of 2 UvrA and 2 UvrB subunits scans DNA for abnormalities. Upon binding of the UvrA(2)B(2) complex to a putative damaged site, the DNA wraps around one UvrB monomer. DNA wrap is dependent on ATP binding by UvrB and probably causes local melting of the DNA helix, facilitating insertion of UvrB beta-hairpin between the DNA strands. Then UvrB probes one DNA strand for the presence of a lesion. If a lesion is found the UvrA subunits dissociate and the UvrB-DNA preincision complex is formed. This complex is subsequently bound by UvrC and the second UvrB is released. If no lesion is found, the DNA wraps around the other UvrB subunit that will check the other stand for damage. The polypeptide is UvrABC system protein B (Clostridium acetobutylicum (strain ATCC 824 / DSM 792 / JCM 1419 / IAM 19013 / LMG 5710 / NBRC 13948 / NRRL B-527 / VKM B-1787 / 2291 / W)).